A 272-amino-acid chain; its full sequence is Formamidopyrimidine-DNA glycosylase (272 aa).

P2 serves as the catalytic Schiff-base intermediate with DNA. E3 acts as the Proton donor in catalysis. K56 acts as the Proton donor; for beta-elimination activity in catalysis. 3 residues coordinate DNA: H89, R108, and K149. An FPG-type zinc finger spans residues 234–268 (LAYGRAGEMCVNCETPLENLKLGQRASVFCPQCQP). R258 acts as the Proton donor; for delta-elimination activity in catalysis.

It belongs to the FPG family. Monomer. The cofactor is Zn(2+).

The enzyme catalyses Hydrolysis of DNA containing ring-opened 7-methylguanine residues, releasing 2,6-diamino-4-hydroxy-5-(N-methyl)formamidopyrimidine.. The catalysed reaction is 2'-deoxyribonucleotide-(2'-deoxyribose 5'-phosphate)-2'-deoxyribonucleotide-DNA = a 3'-end 2'-deoxyribonucleotide-(2,3-dehydro-2,3-deoxyribose 5'-phosphate)-DNA + a 5'-end 5'-phospho-2'-deoxyribonucleoside-DNA + H(+). Its function is as follows. Involved in base excision repair of DNA damaged by oxidation or by mutagenic agents. Acts as a DNA glycosylase that recognizes and removes damaged bases. Has a preference for oxidized purines, such as 7,8-dihydro-8-oxoguanine (8-oxoG). Has AP (apurinic/apyrimidinic) lyase activity and introduces nicks in the DNA strand. Cleaves the DNA backbone by beta-delta elimination to generate a single-strand break at the site of the removed base with both 3'- and 5'-phosphates. The polypeptide is Formamidopyrimidine-DNA glycosylase (Acinetobacter baylyi (strain ATCC 33305 / BD413 / ADP1)).